The primary structure comprises 894 residues: Translation initiation factor IF-2 (894 aa).

The disordered stretch occupies residues Ala-47–Lys-305. A compositionally biased stretch (polar residues) spans Ser-68 to Val-82. 2 stretches are compositionally biased toward basic and acidic residues: residues Val-93–Val-159 and Asp-166–Asp-219. Basic residues predominate over residues Gly-254 to Asn-269. The segment covering Lys-270–Ala-283 has biased composition (basic and acidic residues). The tr-type G domain occupies Pro-393–Lys-562. The G1 stretch occupies residues Gly-402 to Thr-409. Residue Gly-402–Thr-409 participates in GTP binding. The tract at residues Gly-427–His-431 is G2. Positions Asp-448–Gly-451 are G3. GTP is bound by residues Asp-448 to His-452 and Asn-502 to Asp-505. Residues Asn-502 to Asp-505 form a G4 region. Positions Ser-538 to Lys-540 are G5.

This sequence belongs to the TRAFAC class translation factor GTPase superfamily. Classic translation factor GTPase family. IF-2 subfamily.

Its subcellular location is the cytoplasm. Its function is as follows. One of the essential components for the initiation of protein synthesis. Protects formylmethionyl-tRNA from spontaneous hydrolysis and promotes its binding to the 30S ribosomal subunits. Also involved in the hydrolysis of GTP during the formation of the 70S ribosomal complex. The chain is Translation initiation factor IF-2 from Citrobacter koseri (strain ATCC BAA-895 / CDC 4225-83 / SGSC4696).